The sequence spans 360 residues: Peptide chain release factor 1 (360 aa).

Q235 bears the N5-methylglutamine mark.

Belongs to the prokaryotic/mitochondrial release factor family. In terms of processing, methylated by PrmC. Methylation increases the termination efficiency of RF1.

Its subcellular location is the cytoplasm. Its function is as follows. Peptide chain release factor 1 directs the termination of translation in response to the peptide chain termination codons UAG and UAA. In Cupriavidus pinatubonensis (strain JMP 134 / LMG 1197) (Cupriavidus necator (strain JMP 134)), this protein is Peptide chain release factor 1.